Reading from the N-terminus, the 434-residue chain is Chaperone SurA (434 aa).

The N-terminal stretch at 1-20 (MKNWRTLILGLVICANTAFA) is a signal peptide. PpiC domains are found at residues 171 to 272 (DTEL…KVND) and 282 to 382 (VTEV…QLVD).

The protein resides in the periplasm. It carries out the reaction [protein]-peptidylproline (omega=180) = [protein]-peptidylproline (omega=0). In terms of biological role, chaperone involved in the correct folding and assembly of outer membrane proteins. Recognizes specific patterns of aromatic residues and the orientation of their side chains, which are found more frequently in integral outer membrane proteins. May act in both early periplasmic and late outer membrane-associated steps of protein maturation. The polypeptide is Chaperone SurA (Yersinia pestis bv. Antiqua (strain Antiqua)).